Here is a 512-residue protein sequence, read N- to C-terminus: GMP synthase [glutamine-hydrolyzing] (512 aa).

A Glutamine amidotransferase type-1 domain is found at 3–196; it reads NILILDFGSQ…VKHICQASET (194 aa). Residue C80 is the Nucleophile of the active site. Residues H169 and E171 contribute to the active site. A GMPS ATP-PPase domain is found at 197-387; it reads WKIETIEKQL…LGLPDVLISR (191 aa). 225 to 231 contributes to the ATP binding site; it reads SGGVDSS.

Homodimer.

It catalyses the reaction XMP + L-glutamine + ATP + H2O = GMP + L-glutamate + AMP + diphosphate + 2 H(+). It participates in purine metabolism; GMP biosynthesis; GMP from XMP (L-Gln route): step 1/1. Functionally, catalyzes the synthesis of GMP from XMP. The polypeptide is GMP synthase [glutamine-hydrolyzing] (Chlamydia caviae (strain ATCC VR-813 / DSM 19441 / 03DC25 / GPIC) (Chlamydophila caviae)).